The following is a 443-amino-acid chain: Phosphoglucosamine mutase (443 aa).

The active-site Phosphoserine intermediate is the serine 100. Serine 100, aspartate 239, aspartate 241, and aspartate 243 together coordinate Mg(2+). The residue at position 100 (serine 100) is a Phosphoserine.

The protein belongs to the phosphohexose mutase family. The cofactor is Mg(2+). In terms of processing, activated by phosphorylation.

It catalyses the reaction alpha-D-glucosamine 1-phosphate = D-glucosamine 6-phosphate. In terms of biological role, catalyzes the conversion of glucosamine-6-phosphate to glucosamine-1-phosphate. In Shewanella sediminis (strain HAW-EB3), this protein is Phosphoglucosamine mutase.